The following is a 302-amino-acid chain: Recombination-associated protein RdgC (302 aa).

The protein belongs to the RdgC family.

Its subcellular location is the cytoplasm. The protein resides in the nucleoid. Functionally, may be involved in recombination. The chain is Recombination-associated protein RdgC from Halorhodospira halophila (strain DSM 244 / SL1) (Ectothiorhodospira halophila (strain DSM 244 / SL1)).